The sequence spans 172 residues: 3-hydroxydecanoyl-[acyl-carrier-protein] dehydratase (172 aa).

H71 is a catalytic residue.

The protein belongs to the thioester dehydratase family. FabA subfamily. Homodimer.

It localises to the cytoplasm. The catalysed reaction is a (3R)-hydroxyacyl-[ACP] = a (2E)-enoyl-[ACP] + H2O. It catalyses the reaction (3R)-hydroxydecanoyl-[ACP] = (2E)-decenoyl-[ACP] + H2O. It carries out the reaction (2E)-decenoyl-[ACP] = (3Z)-decenoyl-[ACP]. It functions in the pathway lipid metabolism; fatty acid biosynthesis. Its function is as follows. Necessary for the introduction of cis unsaturation into fatty acids. Catalyzes the dehydration of (3R)-3-hydroxydecanoyl-ACP to E-(2)-decenoyl-ACP and then its isomerization to Z-(3)-decenoyl-ACP. Can catalyze the dehydratase reaction for beta-hydroxyacyl-ACPs with saturated chain lengths up to 16:0, being most active on intermediate chain length. The chain is 3-hydroxydecanoyl-[acyl-carrier-protein] dehydratase from Pectobacterium atrosepticum (strain SCRI 1043 / ATCC BAA-672) (Erwinia carotovora subsp. atroseptica).